The chain runs to 174 residues: NADH-ubiquinone oxidoreductase chain 6 (174 aa).

6 helical membrane passes run methionine 1 to serine 21, serine 24 to leucine 44, glycine 47 to phenylalanine 67, valine 86 to valine 106, glycine 111 to glycine 131, and tryptophan 151 to alanine 171.

It belongs to the complex I subunit 6 family. As to quaternary structure, core subunit of respiratory chain NADH dehydrogenase (Complex I) which is composed of 45 different subunits.

The protein localises to the mitochondrion inner membrane. It carries out the reaction a ubiquinone + NADH + 5 H(+)(in) = a ubiquinol + NAD(+) + 4 H(+)(out). Functionally, core subunit of the mitochondrial membrane respiratory chain NADH dehydrogenase (Complex I) which catalyzes electron transfer from NADH through the respiratory chain, using ubiquinone as an electron acceptor. Essential for the catalytic activity and assembly of complex I. This is NADH-ubiquinone oxidoreductase chain 6 (MT-ND6) from Pan paniscus (Pygmy chimpanzee).